The sequence spans 484 residues: Magnesium transporter MRS2-3 (484 aa).

2 disordered regions span residues 1-40 (MRGA…GRKK) and 141-186 (TKPQ…QSLE). The span at 10 to 24 (NFSTNPSTPNTGQPT) shows a compositional bias: polar residues. Positions 203 to 275 (ACLEAASSSL…LLDDDEDMAE (73 aa)) form a coiled coil. The disordered stretch occupies residues 286-320 (LEDSSNSSMNESDTFEVDLPQGDEDDRLPPEFASE). Acidic residues predominate over residues 298 to 311 (DTFEVDLPQGDEDD). Residues 416–436 (GVMLTTATLVMSAFIAVAGVF) form a helical membrane-spanning segment. The Required for magnesium transport activity motif lies at 437–439 (GMN). Residues 455–475 (FIWTVIGGSIGSICLYVGAIG) form a helical membrane-spanning segment.

The protein belongs to the CorA metal ion transporter (MIT) (TC 1.A.35.5) family. Expressed in the whole plant.

The protein localises to the membrane. Magnesium transporter that may mediate the influx of magnesium. This Arabidopsis thaliana (Mouse-ear cress) protein is Magnesium transporter MRS2-3 (MRS2-3).